The sequence spans 53 residues: Zinc metalloproteinase-disintegrin-like alborhagin (53 aa).

It belongs to the venom metalloproteinase (M12B) family. P-III subfamily. P-IIIb sub-subfamily. In terms of assembly, monomer. Requires Zn(2+) as cofactor. Post-translationally, contains numerous disulfide bonds. Glycosylated. As to expression, expressed by the venom gland.

The protein localises to the secreted. Alborhagin-induced platelet aggregation, but not shape change, is inhibited by EDTA, suggesting that the platelet activation (shape change) is independent of divalent cation or metalloproteinase activity. In terms of biological role, induces platelet activation and glycoprotein VI (GP6)-dependent platelet aggregation. Induces ectodomain cleavage of GP6 by activating endogenous platelet metalloproteinases (probably ADAM10). Has fibrinogenolytic activity against the alpha chain of fibrinogen (FGA). Recognizes distinct binding sites as convulxin, since alborhagin has minimal effect on convulxin binding to GPVI-expressing cells. Functionally, disintegrin alborhagin-C: 42 kDa fragment of alborhagin autoproteolysed that does not show platelet activation. The polypeptide is Zinc metalloproteinase-disintegrin-like alborhagin (Trimeresurus albolabris (White-lipped pit viper)).